We begin with the raw amino-acid sequence, 282 residues long: tRNA uridine(34) hydroxylase (282 aa).

The Rhodanese domain maps to 128-222 (EGRPVVMLDT…YFEEVGGSHY (95 aa)). Cys-182 acts as the Cysteine persulfide intermediate in catalysis.

This sequence belongs to the TrhO family.

The enzyme catalyses uridine(34) in tRNA + AH2 + O2 = 5-hydroxyuridine(34) in tRNA + A + H2O. In terms of biological role, catalyzes oxygen-dependent 5-hydroxyuridine (ho5U) modification at position 34 in tRNAs. This is tRNA uridine(34) hydroxylase from Cupriavidus taiwanensis (strain DSM 17343 / BCRC 17206 / CCUG 44338 / CIP 107171 / LMG 19424 / R1) (Ralstonia taiwanensis (strain LMG 19424)).